A 502-amino-acid chain; its full sequence is Lysine--tRNA ligase (502 aa).

Mg(2+) is bound by residues Glu-409 and Glu-416.

Belongs to the class-II aminoacyl-tRNA synthetase family. In terms of assembly, homodimer. Requires Mg(2+) as cofactor.

It is found in the cytoplasm. It catalyses the reaction tRNA(Lys) + L-lysine + ATP = L-lysyl-tRNA(Lys) + AMP + diphosphate. The sequence is that of Lysine--tRNA ligase from Shouchella clausii (strain KSM-K16) (Alkalihalobacillus clausii).